We begin with the raw amino-acid sequence, 141 residues long: Large ribosomal subunit protein uL16 (141 aa).

Positions 1-21 (MLMPKRTKFRKQMKGRNRGKS) are enriched in basic residues. The disordered stretch occupies residues 1–22 (MLMPKRTKFRKQMKGRNRGKSF).

It belongs to the universal ribosomal protein uL16 family. Part of the 50S ribosomal subunit.

Functionally, binds 23S rRNA and is also seen to make contacts with the A and possibly P site tRNAs. The protein is Large ribosomal subunit protein uL16 of Wolinella succinogenes (strain ATCC 29543 / DSM 1740 / CCUG 13145 / JCM 31913 / LMG 7466 / NCTC 11488 / FDC 602W) (Vibrio succinogenes).